Consider the following 488-residue polypeptide: Bifunctional protein HldE (488 aa).

A ribokinase region spans residues 1-330 (MIDFDGLSNA…RNILPPASLA (330 aa)). 205–208 (NSKE) lines the ATP pocket. Asp-275 is a catalytic residue. The tract at residues 358 to 488 (FTNGCFDILH…TSLVKRAGGA (131 aa)) is cytidylyltransferase.

The protein in the N-terminal section; belongs to the carbohydrate kinase PfkB family. In the C-terminal section; belongs to the cytidylyltransferase family. Homodimer.

The catalysed reaction is D-glycero-beta-D-manno-heptose 7-phosphate + ATP = D-glycero-beta-D-manno-heptose 1,7-bisphosphate + ADP + H(+). The enzyme catalyses D-glycero-beta-D-manno-heptose 1-phosphate + ATP + H(+) = ADP-D-glycero-beta-D-manno-heptose + diphosphate. Its pathway is nucleotide-sugar biosynthesis; ADP-L-glycero-beta-D-manno-heptose biosynthesis; ADP-L-glycero-beta-D-manno-heptose from D-glycero-beta-D-manno-heptose 7-phosphate: step 1/4. It participates in nucleotide-sugar biosynthesis; ADP-L-glycero-beta-D-manno-heptose biosynthesis; ADP-L-glycero-beta-D-manno-heptose from D-glycero-beta-D-manno-heptose 7-phosphate: step 3/4. Functionally, catalyzes the phosphorylation of D-glycero-D-manno-heptose 7-phosphate at the C-1 position to selectively form D-glycero-beta-D-manno-heptose-1,7-bisphosphate. In terms of biological role, catalyzes the ADP transfer from ATP to D-glycero-beta-D-manno-heptose 1-phosphate, yielding ADP-D-glycero-beta-D-manno-heptose. This Nitrobacter winogradskyi (strain ATCC 25391 / DSM 10237 / CIP 104748 / NCIMB 11846 / Nb-255) protein is Bifunctional protein HldE.